The chain runs to 329 residues: Holliday junction branch migration complex subunit RuvB (329 aa).

Positions 1–181 (MNELLHQHKA…FGIPLHLEFY (181 aa)) are large ATPase domain (RuvB-L). 9 residues coordinate ATP: leucine 20, arginine 21, glycine 62, lysine 65, threonine 66, threonine 67, arginine 171, tyrosine 181, and arginine 218. Residue threonine 66 coordinates Mg(2+). Residues 182–252 (SVEELMLVIK…FADSALFNLG (71 aa)) are small ATPAse domain (RuvB-S). Residues 255-329 (KSGLDKMDIK…IEHLMNYKYI (75 aa)) form a head domain (RuvB-H) region. The DNA site is built by arginine 308 and arginine 313.

The protein belongs to the RuvB family. Homohexamer. Forms an RuvA(8)-RuvB(12)-Holliday junction (HJ) complex. HJ DNA is sandwiched between 2 RuvA tetramers; dsDNA enters through RuvA and exits via RuvB. An RuvB hexamer assembles on each DNA strand where it exits the tetramer. Each RuvB hexamer is contacted by two RuvA subunits (via domain III) on 2 adjacent RuvB subunits; this complex drives branch migration. In the full resolvosome a probable DNA-RuvA(4)-RuvB(12)-RuvC(2) complex forms which resolves the HJ.

It localises to the cytoplasm. It carries out the reaction ATP + H2O = ADP + phosphate + H(+). In terms of biological role, the RuvA-RuvB-RuvC complex processes Holliday junction (HJ) DNA during genetic recombination and DNA repair, while the RuvA-RuvB complex plays an important role in the rescue of blocked DNA replication forks via replication fork reversal (RFR). RuvA specifically binds to HJ cruciform DNA, conferring on it an open structure. The RuvB hexamer acts as an ATP-dependent pump, pulling dsDNA into and through the RuvAB complex. RuvB forms 2 homohexamers on either side of HJ DNA bound by 1 or 2 RuvA tetramers; 4 subunits per hexamer contact DNA at a time. Coordinated motions by a converter formed by DNA-disengaged RuvB subunits stimulates ATP hydrolysis and nucleotide exchange. Immobilization of the converter enables RuvB to convert the ATP-contained energy into a lever motion, pulling 2 nucleotides of DNA out of the RuvA tetramer per ATP hydrolyzed, thus driving DNA branch migration. The RuvB motors rotate together with the DNA substrate, which together with the progressing nucleotide cycle form the mechanistic basis for DNA recombination by continuous HJ branch migration. Branch migration allows RuvC to scan DNA until it finds its consensus sequence, where it cleaves and resolves cruciform DNA. The polypeptide is Holliday junction branch migration complex subunit RuvB (Anaplasma phagocytophilum (strain HZ)).